Reading from the N-terminus, the 213-residue chain is dITP/XTP pyrophosphatase (213 aa).

A substrate-binding site is contributed by 17–22; the sequence is SNNAGK. Asp-78 acts as the Proton acceptor in catalysis. Asp-78 is a Mg(2+) binding site. Substrate-binding positions include Ser-79, 164 to 167, Lys-187, and 192 to 193; these read FGYD and HR.

Belongs to the HAM1 NTPase family. Homodimer. The cofactor is Mg(2+).

It catalyses the reaction XTP + H2O = XMP + diphosphate + H(+). The enzyme catalyses dITP + H2O = dIMP + diphosphate + H(+). It carries out the reaction ITP + H2O = IMP + diphosphate + H(+). In terms of biological role, pyrophosphatase that catalyzes the hydrolysis of nucleoside triphosphates to their monophosphate derivatives, with a high preference for the non-canonical purine nucleotides XTP (xanthosine triphosphate), dITP (deoxyinosine triphosphate) and ITP. Seems to function as a house-cleaning enzyme that removes non-canonical purine nucleotides from the nucleotide pool, thus preventing their incorporation into DNA/RNA and avoiding chromosomal lesions. The polypeptide is dITP/XTP pyrophosphatase (Bordetella parapertussis (strain 12822 / ATCC BAA-587 / NCTC 13253)).